We begin with the raw amino-acid sequence, 566 residues long: Amino acid transporter 6-1 (566 aa).

11 helical membrane-spanning segments follow: residues 65 to 85, 137 to 157, 158 to 178, 187 to 207, 216 to 236, 250 to 270, 334 to 354, 367 to 387, 392 to 412, 423 to 443, and 455 to 475; these read YVLLLLYSIVVFTTGAVFYGW, MTFAVACLMSAGAGTLLDWLG, PLWTELLGQLLNLVGWLFLAF, YPALVFIGLGADASMLPTLCI, GLIITILGSAASASFGIPLVL, VSIGYCFFGPVLGVLVALLFM, FFSIRYFLIVLYFVVVSWATS, DVVSVIEVLLPLSFIPCILLG, VVGIIRVLFVMNTSGLLTYVF, LSACCFMVYMSLLTSQVYVYV, and LIGISNLTGGLLSLVSNPLYE. Residue Asn476 is glycosylated (N-linked (GlcNAc...) asparagine). The chain crosses the membrane as a helical span at residues 489–509; that stretch reads IQIAMTALLCVQYVWIFILGF.

Belongs to the SLC43A transporter (TC 2.A.1.44) family.

The protein resides in the cell membrane. It catalyses the reaction L-lysine(in) = L-lysine(out). It carries out the reaction L-arginine(in) = L-arginine(out). The enzyme catalyses L-methionine(in) = L-methionine(out). The catalysed reaction is L-leucine(in) = L-leucine(out). Functionally, cationic and neutral amino acid transporter. Transports lysine with high affinity. Can transport arginine, methionine and leucine. Does not require inorganic ions, such as sodium, chloride, potassium, calcium or magnesium, for transport activity. This is Amino acid transporter 6-1 from Toxoplasma gondii (strain ATCC 50611 / Me49).